A 69-amino-acid chain; its full sequence is Brevinin-1Pb (69 aa).

The signal sequence occupies residues 1–20 (MFTLNKFLLLLFFLGTINLS). The propeptide occupies 21–43 (FCEEENAEEERIDEPDETDVEVE). Cysteines 63 and 69 form a disulfide.

As to expression, expressed by the skin glands.

The protein resides in the secreted. Antibacterial activity against Gram-positive bacterium S.aureus and Gram-negative bacterium E.coli. Has activity against C.albicans. The protein is Brevinin-1Pb of Lithobates pipiens (Northern leopard frog).